A 575-amino-acid polypeptide reads, in one-letter code: Transcription factor collier (575 aa).

The interaction with DNA stretch occupies residues 79–82; that stretch reads RKSN. A C5-type zinc finger spans residues 167-186; it reads CRVLLTHEVMCSRCCDKKSC. Interaction with DNA regions lie at residues 213-220 and 252-255; these read NCLKNAGN and NNSK. Residues 255–278 are disordered; that stretch reads KHGRRAKRLDTTEGTGNTSLSISG. Positions 266-276 are enriched in polar residues; the sequence is TEGTGNTSLSI. The IPT/TIG domain maps to 299–382; it reads PCIKAISPSE…KGSPGRFVYV (84 aa). 2 disordered regions span residues 456–492 and 546–575; these read GQWTEDDYQRAQSSSVSPRGGYCSSASTPHSSGGSYG and AATAHPHHHYPHPHQPWHNPAVSAATAAAV. The segment covering 479-492 has biased composition (low complexity); it reads SSASTPHSSGGSYG. The span at 546–557 shows a compositional bias: basic residues; that stretch reads AATAHPHHHYPH. Residues 561–575 show a composition bias toward low complexity; it reads PWHNPAVSAATAAAV.

Belongs to the COE family. In terms of tissue distribution, its expression at the blastoderm stage is restricted to a single stripe of cells corresponding to part of the intercalary and mandibular segment primordia, possibly parasegment O.

The protein resides in the nucleus. May act as a 'second-level regulator' of head patterning. Required for establishment of the PS(-1)/PS0 parasegmental border and formation of the intercalary segment. Required for expression of the segment polarity genes hedgehog, engrailed and wingless, and the segment-identity genes CAP and collar in the intercalary segment. Required at the onset of the gastrulation for the correct formation of the mandibular segment. This chain is Transcription factor collier (kn), found in Drosophila melanogaster (Fruit fly).